A 77-amino-acid chain; its full sequence is Large ribosomal subunit protein bL28 (77 aa).

Positions 1-25 (MARVCQVTGKAPMSGNNVSHANNKT) are disordered.

It belongs to the bacterial ribosomal protein bL28 family.

In Paraburkholderia phytofirmans (strain DSM 17436 / LMG 22146 / PsJN) (Burkholderia phytofirmans), this protein is Large ribosomal subunit protein bL28.